A 698-amino-acid polypeptide reads, in one-letter code: Potassium-transporting ATPase ATP-binding subunit (698 aa).

Helical transmembrane passes span 56 to 76 (IMFV…VPSL), 82 to 102 (LWFN…ANFA), 240 to 260 (TVLI…PLFT), and 271 to 291 (ILVA…LSAI). D324 functions as the 4-aspartylphosphate intermediate in the catalytic mechanism. ATP is bound by residues D361, E365, 393 to 400 (FKAETRMS), and K412. Mg(2+) contacts are provided by D535 and D539. Helical transmembrane passes span 605-625 (FAII…LNIM), 633-653 (AILS…PLAM), and 677-697 (GGVL…GLFI).

Belongs to the cation transport ATPase (P-type) (TC 3.A.3) family. Type IA subfamily. As to quaternary structure, the system is composed of three essential subunits: KdpA, KdpB and KdpC.

The protein localises to the cell membrane. The catalysed reaction is K(+)(out) + ATP + H2O = K(+)(in) + ADP + phosphate + H(+). Part of the high-affinity ATP-driven potassium transport (or Kdp) system, which catalyzes the hydrolysis of ATP coupled with the electrogenic transport of potassium into the cytoplasm. This subunit is responsible for energy coupling to the transport system and for the release of the potassium ions to the cytoplasm. In Bacillus cytotoxicus (strain DSM 22905 / CIP 110041 / 391-98 / NVH 391-98), this protein is Potassium-transporting ATPase ATP-binding subunit.